Here is a 220-residue protein sequence, read N- to C-terminus: MRLILLGAPGAGKGTQANFIKEKFGIPQISTGDMLRAAVKAGTPLGVEAKGYMDAGKLVPDALIIGLVKERLKESDCANGYLFDGFPRTIAQADAMKEAGVAIDYVLEIDVPFSEIIERMSGRRTHPASGRTYHVKFNPPKVEGHDDVTGEPLIQRDDDKEETVKKRLEVYEAQTKPLITYYGDWAQRGEENGLKAPQYRKISGLGSVEEIRERAFGALK.

10-15 contributes to the ATP binding site; that stretch reads GAGKGT. Residues 30–59 form an NMP region; the sequence is STGDMLRAAVKAGTPLGVEAKGYMDAGKLV. AMP is bound by residues threonine 31, arginine 36, 57-59, 85-88, and glutamine 92; these read KLV and GFPR. The tract at residues 122–159 is LID; the sequence is GRRTHPASGRTYHVKFNPPKVEGHDDVTGEPLIQRDDD. ATP contacts are provided by residues arginine 123 and 132–133; that span reads TY. Positions 156 and 167 each coordinate AMP. Glycine 206 contributes to the ATP binding site.

This sequence belongs to the adenylate kinase family. Monomer.

The protein localises to the cytoplasm. It catalyses the reaction AMP + ATP = 2 ADP. Its pathway is purine metabolism; AMP biosynthesis via salvage pathway; AMP from ADP: step 1/1. Its function is as follows. Catalyzes the reversible transfer of the terminal phosphate group between ATP and AMP. Plays an important role in cellular energy homeostasis and in adenine nucleotide metabolism. This Burkholderia lata (strain ATCC 17760 / DSM 23089 / LMG 22485 / NCIMB 9086 / R18194 / 383) protein is Adenylate kinase.